A 957-amino-acid polypeptide reads, in one-letter code: Protein translocase subunit SecA (957 aa).

Residues glutamine 87, 105-109, and aspartate 512 each bind ATP; that span reads GEGKT. The disordered stretch occupies residues 924 to 957; the sequence is AAPAQAPSKSKRSAGRNDPCPCGSGQKYKKCCGK. Residues cysteine 943, cysteine 945, cysteine 954, and cysteine 955 each coordinate Zn(2+).

This sequence belongs to the SecA family. As to quaternary structure, monomer and homodimer. Part of the essential Sec protein translocation apparatus which comprises SecA, SecYEG and auxiliary proteins SecDF-YajC and YidC. Zn(2+) is required as a cofactor.

It is found in the cell inner membrane. The protein localises to the cytoplasm. It carries out the reaction ATP + H2O + cellular proteinSide 1 = ADP + phosphate + cellular proteinSide 2.. Part of the Sec protein translocase complex. Interacts with the SecYEG preprotein conducting channel. Has a central role in coupling the hydrolysis of ATP to the transfer of proteins into and across the cell membrane, serving as an ATP-driven molecular motor driving the stepwise translocation of polypeptide chains across the membrane. In Geobacter sp. (strain M21), this protein is Protein translocase subunit SecA.